Reading from the N-terminus, the 370-residue chain is Cytochrome b (370 aa).

The next 4 membrane-spanning stretches (helical) occupy residues 25 to 45, 69 to 90, 105 to 125, and 170 to 190; these read FGSMLIACSTLQVLTGFFLAV, WLMQNLHAIGASMFFICIYIHI, WLSGTTLLIMLMATAFFGYVL, and FFALHFILPFGIISMSSLHVM. Heme b contacts are provided by H75 and H89. H174 and H188 together coordinate heme b. H193 is a binding site for a ubiquinone. 4 helical membrane passes run 218–238, 280–300, 312–332, and 339–358; these read YKDLLMLAAMTTLLLLIVSFS, LGGALALTMSIVILLTVPFTH, FMQMTFWLFAATFMVITWTAT, and FTLIGQAASMIYFLFFISNP.

This sequence belongs to the cytochrome b family. As to quaternary structure, the cytochrome bc1 complex contains 3 respiratory subunits (MT-CYB, CYC1 and UQCRFS1), 2 core proteins (UQCRC1 and UQCRC2) and probably 6 low-molecular weight proteins. The cofactor is heme b.

The protein localises to the mitochondrion inner membrane. Its function is as follows. Component of the ubiquinol-cytochrome c reductase complex (complex III or cytochrome b-c1 complex) that is part of the mitochondrial respiratory chain. The b-c1 complex mediates electron transfer from ubiquinol to cytochrome c. Contributes to the generation of a proton gradient across the mitochondrial membrane that is then used for ATP synthesis. The chain is Cytochrome b (MT-CYB) from Eunectes notaeus (Yellow anaconda).